The chain runs to 463 residues: Lactaldehyde dehydrogenase (463 aa).

Position 220–225 (Gly220–Gly225) interacts with NAD(+). Residues Glu240 and Cys274 contribute to the active site.

This sequence belongs to the aldehyde dehydrogenase family. As to quaternary structure, homotetramer.

The catalysed reaction is (S)-lactaldehyde + NAD(+) + H2O = (S)-lactate + NADH + 2 H(+). It functions in the pathway cofactor biosynthesis; coenzyme F420 biosynthesis. Its function is as follows. Involved in F420 biosynthesis through the oxidation of lactaldehyde to lactate. The substrate preference order is propionaldehyde &gt; DL-lactaldehyde, DL-glyceraldehyde &gt; crotonaldehyde &gt; glycolaldehyde &gt; acetaldehyde, acrolein &gt; formaldehyde. No activity was observed towards methylglyoxal or glyceraldehyde-3-phosphate. Has a preference for NAD over NADP. The chain is Lactaldehyde dehydrogenase from Methanocaldococcus jannaschii (strain ATCC 43067 / DSM 2661 / JAL-1 / JCM 10045 / NBRC 100440) (Methanococcus jannaschii).